A 271-amino-acid polypeptide reads, in one-letter code: Phosphatidylglycerol--prolipoprotein diacylglyceryl transferase (271 aa).

The next 3 membrane-spanning stretches (helical) occupy residues L17 to A37, I63 to Y83, and I95 to S115. R146 is a binding site for a 1,2-diacyl-sn-glycero-3-phospho-(1'-sn-glycerol). 3 consecutive transmembrane segments (helical) span residues S182–A202, G209–F229, and M243–W263.

This sequence belongs to the Lgt family.

It is found in the cell inner membrane. It carries out the reaction L-cysteinyl-[prolipoprotein] + a 1,2-diacyl-sn-glycero-3-phospho-(1'-sn-glycerol) = an S-1,2-diacyl-sn-glyceryl-L-cysteinyl-[prolipoprotein] + sn-glycerol 1-phosphate + H(+). It participates in protein modification; lipoprotein biosynthesis (diacylglyceryl transfer). Its function is as follows. Catalyzes the transfer of the diacylglyceryl group from phosphatidylglycerol to the sulfhydryl group of the N-terminal cysteine of a prolipoprotein, the first step in the formation of mature lipoproteins. The protein is Phosphatidylglycerol--prolipoprotein diacylglyceryl transferase of Polaromonas naphthalenivorans (strain CJ2).